Reading from the N-terminus, the 393-residue chain is MITLITEQLQKQTLDELKCTRFSVSLPLPDHADIPNCGDPFQLVSEGASWRGLPHCSCAEFQDSLNFSYHPSGLSLHLRPPSRGNSPKEPPLSQVLSPEPPDPEKLPVPPAPPSKRHCRSLSVPVDLSRWQPVWRPAPSKLWTPIKHRGNAGGGGPQVPQQSPPKRVSSLRFLQAPSASSQCAPAHRPYSPPFFSLALAQDSAQPCATSPQSGSWESDAESLSPCPPQRRFSLSPSLGPQASRFLPSARSSPASSPELPWRPRGLRNLPRSRSQPCDLDARKTGVKRRHEEDCRRLRPSLDFDKMNQKPYSGGLCLQETAREEGSNVSPPWFMACSPPPLSASCSPVEGSSQVLSESEEEEEGSVRWERQALSKRTLCQQDFGDLDLNLIEEN.

At Met-1 the chain carries N-acetylmethionine. The segment at His-77–Ser-120 is disordered. A phosphoserine mark is found at Ser-122 and Ser-162. Disordered stretches follow at residues Leu-141–Val-167 and Gln-204–Thr-283. The segment covering Gln-204–Trp-215 has biased composition (polar residues). Phosphoserine is present on residues Ser-232, Ser-234, Ser-255, Ser-273, and Ser-299. Residues Ala-241–Pro-256 show a composition bias toward low complexity. A compositionally biased stretch (low complexity) spans Ser-343–Ser-355. The tract at residues Ser-343–Val-365 is disordered.

The protein belongs to the FAM53 family.

This is Protein FAM53C from Mus musculus (Mouse).